The primary structure comprises 306 residues: Oxygen-dependent coproporphyrinogen-III oxidase (306 aa).

Serine 99 contacts substrate. A divalent metal cation contacts are provided by histidine 103 and histidine 113. The active-site Proton donor is histidine 113. Residue 115 to 117 (NVR) coordinates substrate. A divalent metal cation-binding residues include histidine 152 and histidine 182. The interval 247-282 (YVEFNLVFDRGTLFGLQSGGRTESILMSMPPVANWR) is important for dimerization. 265 to 267 (GGR) is a substrate binding site.

This sequence belongs to the aerobic coproporphyrinogen-III oxidase family. In terms of assembly, homodimer. It depends on a divalent metal cation as a cofactor.

It localises to the cytoplasm. It catalyses the reaction coproporphyrinogen III + O2 + 2 H(+) = protoporphyrinogen IX + 2 CO2 + 2 H2O. It functions in the pathway porphyrin-containing compound metabolism; protoporphyrin-IX biosynthesis; protoporphyrinogen-IX from coproporphyrinogen-III (O2 route): step 1/1. Its function is as follows. Involved in the heme biosynthesis. Catalyzes the aerobic oxidative decarboxylation of propionate groups of rings A and B of coproporphyrinogen-III to yield the vinyl groups in protoporphyrinogen-IX. In Burkholderia ambifaria (strain MC40-6), this protein is Oxygen-dependent coproporphyrinogen-III oxidase.